A 354-amino-acid chain; its full sequence is Replication factor C subunit 3 (354 aa).

41-48 (GPSGSGKK) lines the ATP pocket.

This sequence belongs to the activator 1 small subunits family. Heterotetramer of subunits RFC2, RFC3, RFC4 and RFC5 that can form a complex with RFC1.

It localises to the nucleus. Its function is as follows. May be involved in DNA replication and thus regulate cell proliferation. The chain is Replication factor C subunit 3 (RFC3) from Arabidopsis thaliana (Mouse-ear cress).